The chain runs to 199 residues: MKITALLVLKCAPEASDPVILSNASDVSHFGYFQRSSVKEFVVFVGRTVASRTPPSQRQSVQHEEYKVHAYNRNGLCAVGFMDDHYPVRSAFSLLNQVLDEYQKSFGESWRSAKEDSNQPWPYLTEALNKFQDPAEADKLLKIQRELDETKIILHKTIDSVLARGEKLDSLVEKSSDLSMASQMFYKQAKKTNSCCTIL.

Positions 7–133 (LVLKCAPEAS…LTEALNKFQD (127 aa)) constitute a Longin domain. Positions 139-199 (KLLKIQRELD…KKTNSCCTIL (61 aa)) constitute a v-SNARE coiled-coil homology domain. A lipid anchor (S-palmitoyl cysteine) is attached at C195. C196 is subject to Cysteine methyl ester. C196 is lipidated: S-geranylgeranyl cysteine. Positions 197 to 199 (TIL) are cleaved as a propeptide — removed in mature form.

The protein belongs to the synaptobrevin family. In terms of assembly, interacts with SYP41. Core constituent of the SNARE complex required for membrane fusion at the trans-Golgi network. As to expression, expressed ubiquitously in roots, stems, flowers and leaves.

The protein localises to the cell membrane. Its function is as follows. May be involved in the secretory pathway. Essential for membrane fusion mediated by either SYP41 or SYP61; triggers the fusion of phospholipid vesicles containing SYP41 or SYP61 and VTI12. The polypeptide is VAMP-like protein YKT61 (Arabidopsis thaliana (Mouse-ear cress)).